Reading from the N-terminus, the 312-residue chain is Dipeptide transport ATP-binding protein DppF (312 aa).

An ABC transporter domain is found at 10–255 (IKNLDLTFNK…PIHPYTKSLL (246 aa)). 45 to 52 (GESGSGKT) contributes to the ATP binding site.

Belongs to the ABC transporter superfamily. In terms of assembly, the complex is composed of two ATP-binding proteins (DppD and DppF), two transmembrane proteins (DppB and DppC) and a solute-binding protein (DppA).

The protein localises to the cell membrane. The enzyme catalyses a dipeptide(out) + ATP + H2O = a dipeptide(in) + ADP + phosphate + H(+). Functionally, part of the ABC transporter DppABCDF involved in dipeptide transport. Responsible for energy coupling to the transport system. In Lactococcus lactis subsp. cremoris (strain MG1363), this protein is Dipeptide transport ATP-binding protein DppF.